The following is a 553-amino-acid chain: Efflux pump mlcE (553 aa).

The segment covering 1–19 (MSEPLPPKEGEPRPQKEES) has biased composition (basic and acidic residues). The disordered stretch occupies residues 1–29 (MSEPLPPKEGEPRPQKEESQNDTLEATES). N21 carries an N-linked (GlcNAc...) asparagine glycan. The next 13 membrane-spanning stretches (helical) occupy residues 41–61 (LVVASVTFVAFLMLLDMSIIV), 77–96 (VGWYGSAYLLANCALQPLAG), 101–121 (LLGLKYTFFAFLCIFELGSVL), 136–156 (AVAGMGGSGLVNGALTILSTA), 164–184 (VLIGVMMGLSQIAIVCGPLLG), 196–216 (CFYINLPIGAVAAFLLLVITI), 245–265 (LVGFVVFAAFATMISLALEWG), 273–293 (SSVIIGLFCGGGFALIAFVLW), 319–339 (LFMGFFSGSLLVFSYYLPIYF), 352–372 (VYMLPGILGQVIMAMVSGFAI), 376–396 (GYYLPWALGSAVLVAIGAGLV), 440–460 (ALGISLAVFGQTFGGSLFLDF), and 516–536 (TFYLAVGATACTFVFAFGMGW). An N-linked (GlcNAc...) asparagine glycan is attached at N543.

Belongs to the major facilitator superfamily. TCR/Tet family.

It localises to the membrane. In terms of biological role, efflux pump; part of the gene cluster that mediates the biosynthesis of compactin, also known as mevastatin or ML-236B, and which acts as a potent competitive inhibitor of HMG-CoA reductase. This is Efflux pump mlcE from Penicillium citrinum.